The chain runs to 400 residues: Betaine--homocysteine S-methyltransferase 1 (400 aa).

One can recognise a Hcy-binding domain in the interval 8 to 309 (RGVLERLNAG…YHIRAVAEEL (302 aa)). Zn(2+) is bound by residues Cys-212, Cys-294, and Cys-295.

As to quaternary structure, homotetramer. The cofactor is Zn(2+).

It localises to the cytoplasm. It carries out the reaction L-homocysteine + glycine betaine = N,N-dimethylglycine + L-methionine. It participates in amine and polyamine degradation; betaine degradation; sarcosine from betaine: step 1/2. Its pathway is amino-acid biosynthesis; L-methionine biosynthesis via de novo pathway; L-methionine from L-homocysteine (BhmT route): step 1/1. Involved in the regulation of homocysteine metabolism. Converts betaine and homocysteine to dimethylglycine and methionine, respectively. This reaction is also required for the irreversible oxidation of choline. The polypeptide is Betaine--homocysteine S-methyltransferase 1 (bhmt) (Danio rerio (Zebrafish)).